We begin with the raw amino-acid sequence, 746 residues long: H(+)/Cl(-) exchange transporter 5 (746 aa).

The Cytoplasmic segment spans residues 1 to 54 (MDFLEEPIPGVGTYDDFNTIDWVREKSRDRDRHREITNRSKESTWALIHSVSDA). The next 2 membrane-spanning stretches (helical) occupy residues 55 to 92 (FSGW…ICTE) and 138 to 161 (VNYF…VKVF). The Selectivity filter part_1 motif lies at 167-171 (GSGIP). Ser168 serves as a coordination point for chloride. The helical intramembrane region spans 170–177 (IPEIKTIL). A run of 2 helical transmembrane segments spans residues 186 to 205 (LGKW…VSSG) and 211 to 230 (EGPL…HCFN). Residues 209–213 (GKEGP) carry the Selectivity filter part_2 motif. Intramembrane regions (helical) lie at residues 242–254 (VLSA…VSVA) and 258–266 (PIGGVLFSL). The next 5 membrane-spanning stretches (helical) occupy residues 278 to 296 (LWRS…RSIN), 319 to 344 (LVPF…IAWC), 352 to 372 (LGKY…ILAF), 428 to 448 (MWQL…TFGM), and 453 to 472 (GLFI…LGVG). A Selectivity filter part_3 motif is present at residues 453–457 (GLFIP). Phe455 is a binding site for chloride. The helical intramembrane region spans 500-514 (GLYAMVGAAACLGGV). The segment at residues 515 to 517 (TRM) is an intramembrane region (note=Loop between two helices). The segment at residues 518–529 (TVSLVVIMFELT) is an intramembrane region (helical). An intramembrane region (note=Loop between two helices) is located at residues 530–534 (GGLEY). A helical membrane pass occupies residues 535-552 (IVPLMAAAMTSKWVADAL). Topologically, residues 553–746 (GREGIYDAHI…NQDPDSILFN (194 aa)) are cytoplasmic. Tyr558 serves as a coordination point for chloride. 2 consecutive CBS domains span residues 586-650 (MKPR…ARKE) and 682-742 (ILDL…DPDS). Residues Thr596, 617–619 (YSG), and 724–727 (TKKD) each bind ATP.

It belongs to the chloride channel (TC 2.A.49) family. ClC-5/CLCN5 subfamily. As to quaternary structure, interacts with NEDD4 and NEDD4L. Post-translationally, ubiquitinated by NEDD4L in the presence of albumin; which promotes endocytosis and proteasomal degradation. In terms of tissue distribution, detected in duodenum, jejunum and ileum. Detected in crypt and villus regions of the epithelium of the small intestine.

It localises to the golgi apparatus membrane. The protein resides in the endosome membrane. The protein localises to the cell membrane. It catalyses the reaction 2 chloride(in) + H(+)(out) = 2 chloride(out) + H(+)(in). Proton-coupled chloride transporter. Functions as antiport system and exchanges chloride ions against protons. Important for normal acidification of the endosome lumen. May play an important role in renal tubular function. The CLC channel family contains both chloride channels and proton-coupled anion transporters that exchange chloride or another anion for protons. The absence of conserved gating glutamate residues is typical for family members that function as channels. The sequence is that of H(+)/Cl(-) exchange transporter 5 (CLCN5) from Cavia porcellus (Guinea pig).